A 734-amino-acid polypeptide reads, in one-letter code: Photosystem I P700 chlorophyll a apoprotein A2 (734 aa).

The next 8 helical transmembrane spans lie at 46–69, 135–158, 175–199, 273–291, 330–353, 369–395, 417–439, and 517–535; these read IFAS…FHVA, LYTG…LHLQ, LNHH…HVAI, MAHH…GHMY, IHFQ…QHMY, AALY…IFFI, AIIS…LYVH, and FLVH…LILV. [4Fe-4S] cluster is bound by residues C559 and C568. The next 2 membrane-spanning stretches (helical) occupy residues 575–596 and 643–665; these read AFYL…YWHW and LSVW…MFLI. Chlorophyll a-binding residues include H654, M662, and Y670. W671 serves as a coordination point for phylloquinone. Residues 707–727 form a helical membrane-spanning segment; the sequence is LVGLAHFSVGYIFTYAAFLIA.

Belongs to the PsaA/PsaB family. The PsaA/B heterodimer binds the P700 chlorophyll special pair and subsequent electron acceptors. PSI consists of a core antenna complex that captures photons, and an electron transfer chain that converts photonic excitation into a charge separation. The eukaryotic PSI reaction center is composed of at least 11 subunits. P700 is a chlorophyll a/chlorophyll a' dimer, A0 is one or more chlorophyll a, A1 is one or both phylloquinones and FX is a shared 4Fe-4S iron-sulfur center. is required as a cofactor.

The protein resides in the plastid. It is found in the chloroplast thylakoid membrane. It catalyses the reaction reduced [plastocyanin] + hnu + oxidized [2Fe-2S]-[ferredoxin] = oxidized [plastocyanin] + reduced [2Fe-2S]-[ferredoxin]. Its function is as follows. PsaA and PsaB bind P700, the primary electron donor of photosystem I (PSI), as well as the electron acceptors A0, A1 and FX. PSI is a plastocyanin-ferredoxin oxidoreductase, converting photonic excitation into a charge separation, which transfers an electron from the donor P700 chlorophyll pair to the spectroscopically characterized acceptors A0, A1, FX, FA and FB in turn. Oxidized P700 is reduced on the lumenal side of the thylakoid membrane by plastocyanin. This chain is Photosystem I P700 chlorophyll a apoprotein A2, found in Lobularia maritima (Sweet alyssum).